The chain runs to 272 residues: Small ribosomal subunit protein uS2 (272 aa).

Positions 251–272 (LLTEGAPAAEAPAEAEGETKAE) are disordered. The segment covering 253 to 264 (TEGAPAAEAPAE) has biased composition (low complexity).

It belongs to the universal ribosomal protein uS2 family.

This Bifidobacterium adolescentis (strain ATCC 15703 / DSM 20083 / NCTC 11814 / E194a) protein is Small ribosomal subunit protein uS2.